The chain runs to 90 residues: Small ribosomal subunit protein bS16 (90 aa).

This sequence belongs to the bacterial ribosomal protein bS16 family.

This is Small ribosomal subunit protein bS16 from Lactococcus lactis subsp. cremoris (strain SK11).